We begin with the raw amino-acid sequence, 194 residues long: PRELI domain containing protein 3B (194 aa).

Residues 1–172 (MKIWTSEHVF…VIHKLNAEIE (172 aa)) enclose the PRELI/MSF1 domain. A phosphoserine mark is found at serine 46 and serine 51.

The protein belongs to the slowmo family.

The protein is PRELI domain containing protein 3B (PRELID3B) of Bos taurus (Bovine).